Consider the following 291-residue polypeptide: Lys-63-specific deubiquitinase BRCC36 (291 aa).

Ala2 carries the post-translational modification N-acetylalanine. The MPN domain maps to 12-179 (VHLESDAFLV…YTCFQSIQAQ (168 aa)). Zn(2+)-binding residues include His122, His124, and Asp135. The short motif at 122-135 (HSHPHITVWPSHVD) is the JAMM motif element. A Phosphoserine modification is found at Ser233.

It belongs to the peptidase M67A family. BRCC36 subfamily. Component of the ARISC complex, at least composed of UIMC1/RAP80, ABRAXAS1, BRCC3/BRCC36, BABAM2 and BABAM1/NBA1. Component of the BRCA1-A complex, at least composed of BRCA1, BARD1, UIMC1/RAP80, ABRAXAS1, BRCC3/BRCC36, BABAM2 and BABAM1/NBA1. In the BRCA1-A complex, interacts directly with ABRAXAS1 and BABAM2. Component of the BRISC complex, at least composed of ABRAXAS2, BRCC3/BRCC36, BABAM2 and BABAM1/NBA1. Identified in a complex with SHMT2 and the other subunits of the BRISC complex. In the BRISC complex, interacts directly with ABRAXAS2. Identified in a complex with ABRAXAS2 and NUMA1. The BRISC complex interacts with the CSN complex. Component of the BRCA1/BRCA2 containing complex (BRCC), which also contains BRCA1, BRCA2, BARD1, BABAM2 and RAD51. BRCC is a ubiquitin E3 ligase complex that enhances cellular survival following DNA damage. Interacts with BRCA1. Binds polyubiquitin. Interacts with PWWP2B. Interacts with HDAC1; this interaction is enhanced in the presence of PWWP2B. Zn(2+) is required as a cofactor.

Its subcellular location is the nucleus. The protein resides in the cytoplasm. It localises to the cytoskeleton. The protein localises to the spindle pole. In terms of biological role, metalloprotease that specifically cleaves 'Lys-63'-linked polyubiquitin chains. Does not have activity toward 'Lys-48'-linked polyubiquitin chains. Component of the BRCA1-A complex, a complex that specifically recognizes 'Lys-63'-linked ubiquitinated histones H2A and H2AX at DNA lesions sites, leading to target the BRCA1-BARD1 heterodimer to sites of DNA damage at double-strand breaks (DSBs). In the BRCA1-A complex, it specifically removes 'Lys-63'-linked ubiquitin on histones H2A and H2AX, antagonizing the RNF8-dependent ubiquitination at double-strand breaks (DSBs). Catalytic subunit of the BRISC complex, a multiprotein complex that specifically cleaves 'Lys-63'-linked ubiquitin in various substrates. Mediates the specific 'Lys-63'-specific deubiquitination associated with the COP9 signalosome complex (CSN), via the interaction of the BRISC complex with the CSN complex. The BRISC complex is required for normal mitotic spindle assembly and microtubule attachment to kinetochores via its role in deubiquitinating NUMA1. Plays a role in interferon signaling via its role in the deubiquitination of the interferon receptor IFNAR1; deubiquitination increases IFNAR1 activity by enhancing its stability and cell surface expression. Acts as a regulator of the NLRP3 inflammasome by mediating deubiquitination of NLRP3, leading to NLRP3 inflammasome assembly. Down-regulates the response to bacterial lipopolysaccharide (LPS) via its role in IFNAR1 deubiquitination. Deubiquitinates HDAC1 and PWWP2B leading to their stabilization. This Mus musculus (Mouse) protein is Lys-63-specific deubiquitinase BRCC36 (Brcc3).